Here is an 830-residue protein sequence, read N- to C-terminus: MSLVSAVTGDESRDTNGAEQSSVYQSAGKPLSKEALYRAKLKYGVFQSPAQSLKAGVVNGKDASDTAANLATSNKTTIEAYKRLLNPNASKAANAVITPKKTDQSRPASAVVSSAASSAAIAAPKAARSRTSSTASTTVTYVNSSSSSPLHSKTPKMDITKVLAGAERNAAESVHQRTNPEKVSYVRGITDRSVGKAADASFSLTSDIVSNLPTKKEYIQSAEKESHAAEWAQKAVAALKDFNPDDVTDKNWREREEERKRLIKNLTSETVLTKAKLNAQQRLDTIDRETSQRAIFRNAEYNRAAASVAQENLRKTRSSASATANKVNLGGGLWLAPDDIDNIAKGLIAPVLDEVDQRTGAQRAMDIDIQKRSVDYQQQYEEWVNIQTEKQNNDSLLQAKAFENHQKETADIEATLAKKFQNLCTQKDSEVAKLKEALEAKKAELAKLKEDNEEELKREDEMITTECADLQKSNENELEQAKKDQEELLVPFKNDLAAAEDHHTELQDQKGKIEENIQELRDSIEKHKSHVEELNAQIETQQQQLETETEALNLQSESHQQLKDGIETNYVIMAEKAKEEAKVSSEEARVKQLEVDAIINERQTELSNTEIEVKREKLKLIDAMKEVAEVKNEDKIDEEKAKAFLGTTSGEFLASQKKVEPATKLQSDPKLSEPSSKSTKIEGVTGNVKADVPASPPAHKKHSIGGLTSPLKSKKKSDKDQKGSSIKKFFGLKPSDQNKNTKTTQPTPLKSSPKPSNKPVTATVTTEKKENVEPKSTATETKPSLEPSFSGFSQGSVHNKVEQSDASEVEGGKEEPTSKDNRKSLFKEVF.

3 disordered regions span residues 1–29, 128–156, and 650–830; these read MSLV…SAGK, RSRT…KTPK, and GEFL…KEVF. Composition is skewed to low complexity over residues 128-148 and 741-761; these read RSRT…SSSS and TKTT…KPVT. The segment covering 810–830 has biased composition (basic and acidic residues); that stretch reads EGGKEEPTSKDNRKSLFKEVF.

Belongs to the EIS1 family.

Its subcellular location is the cytoplasmic granule. The protein localises to the cell membrane. Its function is as follows. Required for normal formation of eisosomes, large cytoplasmic protein assemblies that localize to specialized domains on plasma membrane and mark the site of endocytosis. The protein is Eisosome protein 1 (EIS1) of Kluyveromyces lactis (strain ATCC 8585 / CBS 2359 / DSM 70799 / NBRC 1267 / NRRL Y-1140 / WM37) (Yeast).